Here is a 68-residue protein sequence, read N- to C-terminus: Molybdenum-pterin-binding protein 1 (68 aa).

Residues serine 2–alanine 68 form the Mop domain.

In terms of biological role, binds one mole of molybdenum per mole of protein and contains a pterin. This is Molybdenum-pterin-binding protein 1 (mopI) from Clostridium pasteurianum.